Reading from the N-terminus, the 508-residue chain is Chromosomal replication initiator protein DnaA (508 aa).

Positions 1–90 (MSVELWQQCV…RRSSAPRAAP (90 aa)) are domain I, interacts with DnaA modulators. The tract at residues 91–171 (NAPVSAAVAA…QVEGALKHTS (81 aa)) is domain II. Positions 130–160 (EVEEPSSRDSFDSMSDSGSVPAASGRTEQRT) are disordered. The tract at residues 172-388 (YLNRTFTFET…GALKRVIAHS (217 aa)) is domain III, AAA+ region. Residues Gly216, Gly218, Lys219, and Thr220 each contribute to the ATP site. The domain IV, binds dsDNA stretch occupies residues 389 to 508 (HFMGRDITIE…YKNLLRTLTT (120 aa)).

This sequence belongs to the DnaA family. Oligomerizes as a right-handed, spiral filament on DNA at oriC.

The protein localises to the cytoplasm. In terms of biological role, plays an essential role in the initiation and regulation of chromosomal replication. ATP-DnaA binds to the origin of replication (oriC) to initiate formation of the DNA replication initiation complex once per cell cycle. Binds the DnaA box (a 9 base pair repeat at the origin) and separates the double-stranded (ds)DNA. Forms a right-handed helical filament on oriC DNA; dsDNA binds to the exterior of the filament while single-stranded (ss)DNA is stabiized in the filament's interior. The ATP-DnaA-oriC complex binds and stabilizes one strand of the AT-rich DNA unwinding element (DUE), permitting loading of DNA polymerase. After initiation quickly degrades to an ADP-DnaA complex that is not apt for DNA replication. Binds acidic phospholipids. The sequence is that of Chromosomal replication initiator protein DnaA from Pseudomonas entomophila (strain L48).